Consider the following 880-residue polypeptide: DNA-directed RNA polymerase subunit beta C-terminal section (880 aa).

The protein belongs to the RNA polymerase beta chain family. In plastids the minimal PEP RNA polymerase catalytic core is composed of four subunits: alpha, beta, beta', and beta''. When a (nuclear-encoded) sigma factor is associated with the core the holoenzyme is formed, which can initiate transcription.

The protein resides in the plastid. The protein localises to the chloroplast. The catalysed reaction is RNA(n) + a ribonucleoside 5'-triphosphate = RNA(n+1) + diphosphate. Its function is as follows. DNA-dependent RNA polymerase catalyzes the transcription of DNA into RNA using the four ribonucleoside triphosphates as substrates. This Pleurastrum terricola (Filamentous green alga) protein is DNA-directed RNA polymerase subunit beta C-terminal section (rpoB2).